The following is a 465-amino-acid chain: Exoenzymes regulatory protein AepA (465 aa).

The first 21 residues, 1-21 (MKFNVKMLSVTLGLFTSHAFA), serve as a signal peptide directing secretion.

The protein belongs to the metallo-dependent hydrolases superfamily.

Functionally, involved in the control of extracellular enzymes production. Stimulates PEL, PEH, CEL, and PRT production. In Pectobacterium carotovorum subsp. carotovorum (Erwinia carotovora subsp. carotovora), this protein is Exoenzymes regulatory protein AepA (aepA).